Reading from the N-terminus, the 119-residue chain is NADH-quinone oxidoreductase subunit A (119 aa).

The next 3 helical transmembrane spans lie at 7 to 27 (FPVLLFLVVGTGLGVALVSIG), 63 to 83 (LVAILFIIFDLETAFLFPWGV), and 88 to 108 (IGWPGFLAMMIFLLEFLLGFA).

Belongs to the complex I subunit 3 family. In terms of assembly, NDH-1 is composed of 14 different subunits. Subunits NuoA, H, J, K, L, M, N constitute the membrane sector of the complex.

It localises to the cell inner membrane. The enzyme catalyses a quinone + NADH + 5 H(+)(in) = a quinol + NAD(+) + 4 H(+)(out). NDH-1 shuttles electrons from NADH, via FMN and iron-sulfur (Fe-S) centers, to quinones in the respiratory chain. The immediate electron acceptor for the enzyme in this species is believed to be ubiquinone. Couples the redox reaction to proton translocation (for every two electrons transferred, four hydrogen ions are translocated across the cytoplasmic membrane), and thus conserves the redox energy in a proton gradient. This Paraburkholderia phytofirmans (strain DSM 17436 / LMG 22146 / PsJN) (Burkholderia phytofirmans) protein is NADH-quinone oxidoreductase subunit A.